Consider the following 221-residue polypeptide: Large ribosomal subunit protein uL3 (221 aa).

This sequence belongs to the universal ribosomal protein uL3 family. Part of the 50S ribosomal subunit. Forms a cluster with proteins L14 and L19.

One of the primary rRNA binding proteins, it binds directly near the 3'-end of the 23S rRNA, where it nucleates assembly of the 50S subunit. In Chlamydia trachomatis serovar L2 (strain ATCC VR-902B / DSM 19102 / 434/Bu), this protein is Large ribosomal subunit protein uL3.